The primary structure comprises 403 residues: Sorting nexin-32 (403 aa).

One can recognise a PX domain in the interval 20-168 (LQGDSSLQVE…VFLEYGQDLS (149 aa)). Positions 258–335 (NQLRTSFLKL…KARTRNREVR (78 aa)) form a coiled coil.

It belongs to the sorting nexin family.

Functionally, may be involved in several stages of intracellular trafficking. The chain is Sorting nexin-32 (SNX32) from Homo sapiens (Human).